Reading from the N-terminus, the 417-residue chain is NADH-quinone oxidoreductase subunit D (417 aa).

This sequence belongs to the complex I 49 kDa subunit family. In terms of assembly, NDH-1 is composed of 14 different subunits. Subunits NuoB, C, D, E, F, and G constitute the peripheral sector of the complex.

It is found in the cell inner membrane. It carries out the reaction a quinone + NADH + 5 H(+)(in) = a quinol + NAD(+) + 4 H(+)(out). Functionally, NDH-1 shuttles electrons from NADH, via FMN and iron-sulfur (Fe-S) centers, to quinones in the respiratory chain. The immediate electron acceptor for the enzyme in this species is believed to be ubiquinone. Couples the redox reaction to proton translocation (for every two electrons transferred, four hydrogen ions are translocated across the cytoplasmic membrane), and thus conserves the redox energy in a proton gradient. The protein is NADH-quinone oxidoreductase subunit D of Leptothrix cholodnii (strain ATCC 51168 / LMG 8142 / SP-6) (Leptothrix discophora (strain SP-6)).